A 625-amino-acid polypeptide reads, in one-letter code: Chromatin structure-remodeling complex subunit RSC4 (625 aa).

A disordered region spans residues 1–35 (MVVKKRKLATEAGGSDERPKYLPGKHPKNQEKTPH). 2 Bromo domains span residues 53–158 (WHIP…VLKA) and 181–292 (KLVD…IQKE). Phosphoserine is present on residues serine 199 and serine 545. Polar residues predominate over residues 536 to 552 (RTSNVNSNLSQPQQQEN). Positions 536-555 (RTSNVNSNLSQPQQQENDVI) are disordered.

Component of the two forms of the RSC complex composed of at least either RSC1 or RSC2, and ARP7, ARP9, LDB7, NPL6, RSC3, RSC30, RSC4, RSC58, RSC6, RSC8, RSC9, SFH1, STH1, HTL1 and probably RTT102. The complexes interact with histone and histone variant components of centromeric chromatin.

It is found in the nucleus. In terms of biological role, component of the chromatin structure remodeling complex (RSC), which is involved in transcription regulation and nucleosome positioning. RSC is responsible for the transfer of a histone octamer from a nucleosome core particle to naked DNA. The reaction requires ATP and involves an activated RSC-nucleosome intermediate. Remodeling reaction also involves DNA translocation, DNA twist and conformational change. As a reconfigurer of centromeric and flanking nucleosomes, RSC complex is required both for proper kinetochore function in chromosome segregation and, via a PKC1-dependent signaling pathway, for organization of the cellular cytoskeleton. The sequence is that of Chromatin structure-remodeling complex subunit RSC4 (RSC4) from Saccharomyces cerevisiae (strain ATCC 204508 / S288c) (Baker's yeast).